The primary structure comprises 42 residues: Photosystem I reaction center subunit IX (42 aa).

The chain crosses the membrane as a helical span at residues 7 to 27 (YLSTAPVLATLWFGFLAGLLI).

This sequence belongs to the PsaJ family.

The protein resides in the plastid. Its subcellular location is the chloroplast thylakoid membrane. Functionally, may help in the organization of the PsaE and PsaF subunits. The sequence is that of Photosystem I reaction center subunit IX from Huperzia lucidula (Shining clubmoss).